Consider the following 96-residue polypeptide: Small ribosomal subunit protein bS6 (96 aa).

This sequence belongs to the bacterial ribosomal protein bS6 family.

Binds together with bS18 to 16S ribosomal RNA. In Corynebacterium aurimucosum (strain ATCC 700975 / DSM 44827 / CIP 107346 / CN-1) (Corynebacterium nigricans), this protein is Small ribosomal subunit protein bS6.